A 236-amino-acid chain; its full sequence is Ribose-5-phosphate isomerase A (236 aa).

Substrate is bound by residues Thr32–Thr35, Asp87–Asp90, and Lys100–Gly103. Residue Glu109 is the Proton acceptor of the active site. Lys127 provides a ligand contact to substrate.

This sequence belongs to the ribose 5-phosphate isomerase family. As to quaternary structure, homodimer.

It catalyses the reaction aldehydo-D-ribose 5-phosphate = D-ribulose 5-phosphate. Its pathway is carbohydrate degradation; pentose phosphate pathway; D-ribose 5-phosphate from D-ribulose 5-phosphate (non-oxidative stage): step 1/1. Catalyzes the reversible conversion of ribose-5-phosphate to ribulose 5-phosphate. The chain is Ribose-5-phosphate isomerase A from Haloquadratum walsbyi (strain DSM 16790 / HBSQ001).